The primary structure comprises 472 residues: MVISNSIKTSVPHFVISDISLSDFGRKEIKIAETEMPGLMALRDKYQSEKPLKGAKIAGSLHMTIQTAVLIETLVDLGAQVKWASCNIFSTQDHAAAAIADRGIPVFAKKGETLDEYWQYTHYILDWGSDSPNMILDDGGDATGLLILGSKAEKDLSVLDNPSNEEETALFSSIKSKLQVDGSFYSRIKSNIIGVTEETTTGVARLYQLQKQKSLPFPAINVNDSVTKSKFDNLYGCRESLVDSIKRATDVMIAGKVALVIGFGDVGKGSAQSLRGLGAIVKVAEVDPICALQAAMEGYSVVRLEDVVEDIDIFVTATGNYQVITKENLVKMKNEAIVCNIGHFDNEIDVASLKNYPWENIKPQVDHITLPSGNKIILLAEGRLVNLGCATGHPSFVMSNSFTNQVLAQIELFNKSEQYAKEVYVLPKHLDEMVARLHLDKIGAKLTKLTKEQADYINVSVEGPYKSELYRY.

Positions 64, 138, and 198 each coordinate substrate. 199–201 contributes to the NAD(+) binding site; the sequence is TTT. Positions 228 and 232 each coordinate substrate. NAD(+) is bound by residues Asn-233, 262–267, Glu-285, Asn-320, 341–343, and Asn-386; these read GFGDVG and IGH.

Belongs to the adenosylhomocysteinase family. Requires NAD(+) as cofactor.

It localises to the cytoplasm. It catalyses the reaction S-adenosyl-L-homocysteine + H2O = L-homocysteine + adenosine. Its pathway is amino-acid biosynthesis; L-homocysteine biosynthesis; L-homocysteine from S-adenosyl-L-homocysteine: step 1/1. May play a key role in the regulation of the intracellular concentration of adenosylhomocysteine. The sequence is that of Adenosylhomocysteinase from Prochlorococcus marinus (strain MIT 9215).